Reading from the N-terminus, the 280-residue chain is Diaminopimelate epimerase (280 aa).

Substrate is bound by residues Asn-13 and Asn-66. The active-site Proton donor is Cys-75. Residues 76–77 (GN), Asn-165, Asn-198, and 216–217 (ER) contribute to the substrate site. The Proton acceptor role is filled by Cys-225. Residue 226-227 (GT) participates in substrate binding.

It belongs to the diaminopimelate epimerase family. As to quaternary structure, homodimer.

It is found in the cytoplasm. The catalysed reaction is (2S,6S)-2,6-diaminopimelate = meso-2,6-diaminopimelate. Its pathway is amino-acid biosynthesis; L-lysine biosynthesis via DAP pathway; DL-2,6-diaminopimelate from LL-2,6-diaminopimelate: step 1/1. Functionally, catalyzes the stereoinversion of LL-2,6-diaminopimelate (L,L-DAP) to meso-diaminopimelate (meso-DAP), a precursor of L-lysine and an essential component of the bacterial peptidoglycan. This Cyanothece sp. (strain PCC 7425 / ATCC 29141) protein is Diaminopimelate epimerase.